The following is a 216-amino-acid chain: Holliday junction branch migration complex subunit RuvA (216 aa).

Residues 1 to 64 (MISFIKGVLI…EDAQQLYGFK (64 aa)) are domain I. Residues 65–143 (SKVDKKVFQE…KMANEIYAQT (79 aa)) form a domain II region. The interval 144 to 163 (SGTTTTSQDSQAQQAPTSVV) is flexible linker. A domain III region spans residues 164–216 (LANSIFNESVDALLALGYKQKDAEKMARSAMGDATTAAEVIRKALQGSIKSKR).

This sequence belongs to the RuvA family. Homotetramer. Forms an RuvA(8)-RuvB(12)-Holliday junction (HJ) complex. HJ DNA is sandwiched between 2 RuvA tetramers; dsDNA enters through RuvA and exits via RuvB. An RuvB hexamer assembles on each DNA strand where it exits the tetramer. Each RuvB hexamer is contacted by two RuvA subunits (via domain III) on 2 adjacent RuvB subunits; this complex drives branch migration. In the full resolvosome a probable DNA-RuvA(4)-RuvB(12)-RuvC(2) complex forms which resolves the HJ.

The protein resides in the cytoplasm. Functionally, the RuvA-RuvB-RuvC complex processes Holliday junction (HJ) DNA during genetic recombination and DNA repair, while the RuvA-RuvB complex plays an important role in the rescue of blocked DNA replication forks via replication fork reversal (RFR). RuvA specifically binds to HJ cruciform DNA, conferring on it an open structure. The RuvB hexamer acts as an ATP-dependent pump, pulling dsDNA into and through the RuvAB complex. HJ branch migration allows RuvC to scan DNA until it finds its consensus sequence, where it cleaves and resolves the cruciform DNA. In Francisella tularensis subsp. mediasiatica (strain FSC147), this protein is Holliday junction branch migration complex subunit RuvA.